A 303-amino-acid polypeptide reads, in one-letter code: Probable cell division protein WhiA (303 aa).

Residues 272–303 constitute a DNA-binding region (H-T-H motif); it reads SIQQLADSLSTPLTKSGVNHRLRKINKIADEL.

The protein belongs to the WhiA family.

Involved in cell division and chromosome segregation. This Streptococcus pneumoniae (strain Hungary19A-6) protein is Probable cell division protein WhiA.